A 1273-amino-acid polypeptide reads, in one-letter code: Kinesin-like protein KIN-14A (1273 aa).

The segment at 1–52 (MADQRSKTNRWNWEVSGFEPRKSSSNASFAESTGHRTTGPLLRRNSISTPSL) is disordered. Positions 59 to 89 (ASKVNGLKEKVKLAKEDYLELRQEATDLQEY) form a coiled coil. Residues 142–456 (NIKVFCRARP…LNYAARARNT (315 aa)) form the Kinesin motor domain. 223–230 (GQTNAGKT) is an ATP binding site. Coiled-coil stretches lie at residues 466–511 (IKKW…CVLL), 559–595 (QLDQ…AVRS), and 627–657 (TKKL…RLTE). Disordered regions lie at residues 827–847 (KPNT…RSPV) and 1136–1157 (QEDT…SISS). A compositionally biased stretch (low complexity) spans 830-846 (TGRSKSTSRGSSPGRSP).

It belongs to the TRAFAC class myosin-kinesin ATPase superfamily. Kinesin family. KIN-14 subfamily. In terms of assembly, homodimer and heterodimer with KCA2. Interacts with CDKA-1. Interacts with AL1, a geminivirus (TGMV) protein essential for viral replication. Interacts with LUE1/KSS. Post-translationally, part of the phosphorylation is not CDK-dependent. Widely expressed.

Its subcellular location is the nucleus. It localises to the cytoplasm. The protein resides in the cytoskeleton. It is found in the spindle. The protein localises to the chromosome. Its subcellular location is the cell membrane. It localises to the phragmoplast. In terms of biological role, kinesin-like protein required for chloroplast movements and anchor to the plasma membrane. Mediates chloroplast movement via chloroplast actin (cp-actin) filaments. Required for the chloroplast avoidance response under high intensity blue light. Mediates redundantly with CHUP1 the nuclear avoidance response under high intensity blue light. May act as a mitotic kinesin. Probably involved in division plane determination. This is Kinesin-like protein KIN-14A from Arabidopsis thaliana (Mouse-ear cress).